The primary structure comprises 1036 residues: MEAQVENAIQIAFDPTSSQQLRGQAVEFLERLRSEGSAWQASLALFTRDPRPSDIIRHTSLDLVNNAVQEHRLDEQSLAYIKDTLMSHVRQSYAPGSSTADTSHIQNKLMQTMTYLFAALYPTSWRSFFDDFRALAGDQATIGNVNTATTFLYLRMLVQVHDEIADQLVARSKEETDRNTHLKDLIRDNDIQKIALSWQEILAKWRETDLSLVEMCLRTIGRYVSWIRLELVINQDMITTFLEMAGQQGISDPESPAGKVRDAAIDTFSEIVGKKMEPSNKIELILFLNLPDVVGQLITSPALAEFNSPNYDNDLAETVAKLVNNIVFDVVKILENDNVDEQTRQRADDLIRIFTPYLLRFFADQYDEVCSTVIPSLTDLLTFLRKLQKKQGTVPPQYAAVLPPVLDAIIAKMKYDETADWGEEGEQTDEAEFQDLRRRLHVLQQTITTIDESYYIETLSRLVNGTFSGLSQGDQSLNWRDLELALYEMYLFGELAIRNQGLFAKREPSSVAAQHLVGMMNSMIDSGLANYPHPAVQLQYMEICVRYYQFFEQNPHLIPKVLENFVQLTHSSHVKVRSRSWYLFQRLVKHLRAQLGNVSYDIIQAVADLLTIKAELPDTSEDEMSSDEEDQSADALFNSQLYLFEAVGCIASSNTVSAENKKLYAQTIMSPLFVDLEQTLPQARNGDDRATLQIHHIIMALGTLARGYSDWVPSNNSSAVPHSDVADEFVKASEAILVALESLNSSSSIRHAARFAFSRMIAVLGSRLLQQLPSWIEGLLSLSSSMDEISTFLKVLGQVVFTFKSEISNILDTVMTPVLQRIFSALATTPSGTDDEIQLAELRREYLNFLIVVLNQGLGSVLVSNTNQSSFETIISSIENFARDTHDAPTARLAIFVLIRMINVWCGPDKVGPGANQTPTSPATTQAPLPGFENYVVERFSPLAWSIPASPGFNSKDAQAKQVLVEAANLQTEIVKKVGEPYVERLKSDLSGNGVAADGVDQYVRTLAGALEGTKKEKEWRNFFVQFVDRMLSGRG.

This sequence belongs to the exportin family.

Its subcellular location is the nucleus. It localises to the cytoplasm. Functionally, tRNA nucleus export receptor which facilitates tRNA translocation across the nuclear pore complex. Involved in pre-tRNA splicing, probably by affecting the interaction of pre-tRNA with splicing endonuclease. This chain is Exportin-T (LOS1), found in Phaeosphaeria nodorum (strain SN15 / ATCC MYA-4574 / FGSC 10173) (Glume blotch fungus).